A 142-amino-acid polypeptide reads, in one-letter code: Hemoglobin subunit alpha (142 aa).

The Globin domain occupies 1 to 142 (GLTAADKTLI…VEKALFETYR (142 aa)). Histidine 59 is a binding site for O2. Heme b is bound at residue histidine 88.

It belongs to the globin family. As to quaternary structure, heterotetramer of two alpha chains and two beta chains (an easy dimerization is also reported). In terms of tissue distribution, red blood cells.

In terms of biological role, involved in oxygen transport from the lung to the various peripheral tissues. The polypeptide is Hemoglobin subunit alpha (HBA) (Latimeria chalumnae (Coelacanth)).